Here is a 278-residue protein sequence, read N- to C-terminus: Small ribosomal subunit protein uS5 (278 aa).

The disordered stretch occupies residues 1-43; sequence MADAPAPAGGRGGFRGGFGGRGRGRGRGRGRGRGRGRGAKDGD. Over residues 9–21 the composition is skewed to gly residues; sequence GGRGGFRGGFGGR. The segment covering 22-37 has biased composition (basic residues); the sequence is GRGRGRGRGRGRGRGR. An S5 DRBM domain is found at 88-151; the sequence is LKDEVLKIMP…ILAKLSVVPV (64 aa).

This sequence belongs to the universal ribosomal protein uS5 family.

Functionally, component of the ribosome, a large ribonucleoprotein complex responsible for the synthesis of proteins in the cell. The small ribosomal subunit (SSU) binds messenger RNAs (mRNAs) and translates the encoded message by selecting cognate aminoacyl-transfer RNA (tRNA) molecules. The large subunit (LSU) contains the ribosomal catalytic site termed the peptidyl transferase center (PTC), which catalyzes the formation of peptide bonds, thereby polymerizing the amino acids delivered by tRNAs into a polypeptide chain. The nascent polypeptides leave the ribosome through a tunnel in the LSU and interact with protein factors that function in enzymatic processing, targeting, and the membrane insertion of nascent chains at the exit of the ribosomal tunnel. Plays a role in the assembly and function of the 40S ribosomal subunit. Mutations in this protein affects the control of translational fidelity. Involved in nucleolar processing of pre-18S ribosomal RNA and ribosome assembly. This Urechis caupo (Innkeeper worm) protein is Small ribosomal subunit protein uS5 (RPS2).